The following is a 969-amino-acid chain: Isoleucine--tRNA ligase (969 aa).

A 'HIGH' region motif is present at residues 70–80; that stretch reads PYANGAIHIGH. E601 is a binding site for L-isoleucyl-5'-AMP. Residues 642–646 carry the 'KMSKS' region motif; sequence KMSKS. K645 lines the ATP pocket.

The protein belongs to the class-I aminoacyl-tRNA synthetase family. IleS type 1 subfamily. In terms of assembly, monomer.

It localises to the cytoplasm. It catalyses the reaction tRNA(Ile) + L-isoleucine + ATP = L-isoleucyl-tRNA(Ile) + AMP + diphosphate. Functionally, catalyzes the attachment of isoleucine to tRNA(Ile). As IleRS can inadvertently accommodate and process structurally similar amino acids such as valine, to avoid such errors it has two additional distinct tRNA(Ile)-dependent editing activities. One activity is designated as 'pretransfer' editing and involves the hydrolysis of activated Val-AMP. The other activity is designated 'posttransfer' editing and involves deacylation of mischarged Val-tRNA(Ile). This Caulobacter vibrioides (strain ATCC 19089 / CIP 103742 / CB 15) (Caulobacter crescentus) protein is Isoleucine--tRNA ligase.